The sequence spans 429 residues: tRNA modification GTPase MnmE (429 aa).

The (6S)-5-formyl-5,6,7,8-tetrahydrofolate site is built by Arg-20, Glu-77, and Arg-117. A TrmE-type G domain is found at 213–353; that stretch reads GFEVAILGAP…LVKAVSHRLS (141 aa). Residue Asn-223 participates in K(+) binding. Residues 223 to 228, 242 to 248, and 267 to 270 contribute to the GTP site; these read NVGKSS, SSIAGTT, and DTAG. Residue Ser-227 participates in Mg(2+) binding. Residues Ser-242, Ile-244, and Thr-247 each contribute to the K(+) site. Residue Thr-248 coordinates Mg(2+). A (6S)-5-formyl-5,6,7,8-tetrahydrofolate-binding site is contributed by Lys-429.

Belongs to the TRAFAC class TrmE-Era-EngA-EngB-Septin-like GTPase superfamily. TrmE GTPase family. Homodimer. Heterotetramer of two MnmE and two MnmG subunits. The cofactor is K(+).

The protein localises to the cytoplasm. Functionally, exhibits a very high intrinsic GTPase hydrolysis rate. Involved in the addition of a carboxymethylaminomethyl (cmnm) group at the wobble position (U34) of certain tRNAs, forming tRNA-cmnm(5)s(2)U34. The chain is tRNA modification GTPase MnmE from Dinoroseobacter shibae (strain DSM 16493 / NCIMB 14021 / DFL 12).